Consider the following 103-residue polypeptide: Large ribosomal subunit protein bL21 (103 aa).

This sequence belongs to the bacterial ribosomal protein bL21 family. In terms of assembly, part of the 50S ribosomal subunit. Contacts protein L20.

Its function is as follows. This protein binds to 23S rRNA in the presence of protein L20. This chain is Large ribosomal subunit protein bL21, found in Aliivibrio salmonicida (strain LFI1238) (Vibrio salmonicida (strain LFI1238)).